The primary structure comprises 167 residues: Shikimate kinase (167 aa).

ATP is bound at residue 8-15; sequence GFMGSGKT.

This sequence belongs to the shikimate kinase family.

The protein resides in the cytoplasm. It catalyses the reaction shikimate + ATP = 3-phosphoshikimate + ADP + H(+). It participates in metabolic intermediate biosynthesis; chorismate biosynthesis; chorismate from D-erythrose 4-phosphate and phosphoenolpyruvate: step 5/7. In Helicobacter hepaticus (strain ATCC 51449 / 3B1), this protein is Shikimate kinase.